The sequence spans 457 residues: MGREIISIHIGQAGVQVGNSCWELYCLEHGIERDGSIPADRKQSSDVNNLNKDLGTFFSESTNGKKVVPRAIFLDLEPTVIDEIRTGDYKNLFHPEQLITGKEDAANNYARGHYTVGKELIDVCVDRIRRLADQCDGLQGFLVFHSVGGGTGSGFGSLLLQKLALDYGGKKSKLDFCVYPSPQVSTSVVEPYNSVLSTHSLLEHTDVSFMLDNEAIYNICKNSLDIEKPTYTNLNRLIAQVISSLTSSLRFPGQLNLDINDIQTNLVPFPRLHFVLCSYAPVISREKAHHETITVDNITSAVFSEKNIMAKCQPNLGKYMACCLMYRGDIVPKEAQKAVQNIRSEKSRNVSFVDWSPTGFKCGINNQAPVSTKDSEMAEVKKSVCMLSNTTAISQVFSRINHKFDLMFVKRAFVHWYVGEGMEEGEFAEARDDLLALEKDYESVSASTEGEEQEEEY.

Residues Gln-12, Glu-77, Ser-146, Gly-150, Thr-151, Thr-186, Asn-213, and Asn-235 each contribute to the GTP site. Glu-77 lines the Mg(2+) pocket.

Belongs to the tubulin family. Dimer of alpha and beta chains. A typical microtubule is a hollow water-filled tube with an outer diameter of 25 nm and an inner diameter of 15 nM. Alpha-beta heterodimers associate head-to-tail to form protofilaments running lengthwise along the microtubule wall with the beta-tubulin subunit facing the microtubule plus end conferring a structural polarity. Microtubules usually have 13 protofilaments but different protofilament numbers can be found in some organisms and specialized cells. Mg(2+) serves as cofactor. Undergoes a tyrosination/detyrosination cycle, the cyclic removal and re-addition of a C-terminal tyrosine residue by the enzymes tubulin tyrosine carboxypeptidase (TTCP) and tubulin tyrosine ligase (TTL), respectively.

It localises to the cytoplasm. The protein resides in the cytoskeleton. It catalyses the reaction GTP + H2O = GDP + phosphate + H(+). Its function is as follows. Tubulin is the major constituent of microtubules, a cylinder consisting of laterally associated linear protofilaments composed of alpha- and beta-tubulin heterodimers. Microtubules grow by the addition of GTP-tubulin dimers to the microtubule end, where a stabilizing cap forms. Below the cap, tubulin dimers are in GDP-bound state, owing to GTPase activity of alpha-tubulin. The chain is Tubulin alpha chain (tubA) from Dictyostelium discoideum (Social amoeba).